The chain runs to 403 residues: Chorismate synthase (403 aa).

The NADP(+) site is built by Arg-40 and Arg-46. FMN contacts are provided by residues 140 to 142, 261 to 262, Gly-305, 320 to 324, and Arg-346; these read RSS, QA, and KPIST.

This sequence belongs to the chorismate synthase family. Homotetramer. FMNH2 is required as a cofactor.

The enzyme catalyses 5-O-(1-carboxyvinyl)-3-phosphoshikimate = chorismate + phosphate. Its pathway is metabolic intermediate biosynthesis; chorismate biosynthesis; chorismate from D-erythrose 4-phosphate and phosphoenolpyruvate: step 7/7. In terms of biological role, catalyzes the anti-1,4-elimination of the C-3 phosphate and the C-6 proR hydrogen from 5-enolpyruvylshikimate-3-phosphate (EPSP) to yield chorismate, which is the branch point compound that serves as the starting substrate for the three terminal pathways of aromatic amino acid biosynthesis. This reaction introduces a second double bond into the aromatic ring system. This chain is Chorismate synthase, found in Corynebacterium diphtheriae (strain ATCC 700971 / NCTC 13129 / Biotype gravis).